The chain runs to 547 residues: G protein-coupled receptor associated sorting protein 3 (547 aa).

2 stretches are compositionally biased toward basic residues: residues M1–A10 and A38–T48. The segment at M1–D53 is disordered.

It belongs to the GPRASP family. As to quaternary structure, homodimer.

It localises to the cytoplasm. The protein resides in the nucleus. Functionally, survival and differentiation promoting protein that plays a role in the regulation of neurosynaptogenesis. Induces phosphatase PP2A activity which results in APP dephosphorylation and inhibits BACE1-mediated processing of APP. This chain is G protein-coupled receptor associated sorting protein 3 (GPRASP3), found in Macaca fascicularis (Crab-eating macaque).